Reading from the N-terminus, the 261-residue chain is MSNGSSVSHSANTAPYVELPAFQGPMDLLLHLIQQEKVDIYDIPIARITDQFIQVVRQMEDLDMEVTTEFLVLAAQLLQIKSRYLLPKPVKDVTVEEEGDPRQELVERLLAYRAFKQAAETLGEIQISSGQRYFREVDVDGLRSQFTPADPLAGIHFEALWHAFQRIIERAEQGEEIRTVEPDEIPIEVMVNDVLRRVILHPRGLRFSQLIRGTKRMEIIVSFLALLELLKSGKVHCEQSSQNEEIFVFPTEKAWEFTEGE.

The protein belongs to the ScpA family. As to quaternary structure, component of a cohesin-like complex composed of ScpA, ScpB and the Smc homodimer, in which ScpA and ScpB bind to the head domain of Smc. The presence of the three proteins is required for the association of the complex with DNA.

The protein localises to the cytoplasm. Functionally, participates in chromosomal partition during cell division. May act via the formation of a condensin-like complex containing Smc and ScpB that pull DNA away from mid-cell into both cell halves. This chain is Segregation and condensation protein A, found in Desulfitobacterium hafniense (strain DSM 10664 / DCB-2).